The sequence spans 371 residues: Diterpene cyclase DtcycA (371 aa).

Mg(2+) contacts are provided by Asn-234, Ser-238, and Glu-242.

Belongs to the terpene synthase family. In terms of assembly, homodimer. Mg(2+) is required as a cofactor.

It carries out the reaction (2E,6E,10E)-geranylgeranyl diphosphate = cembrene C + diphosphate. The catalysed reaction is (2E,6E,10E)-geranylgeranyl diphosphate + H2O = (R)-nephthenol + diphosphate. Functionally, diterpene cyclases that can form multiple diterpene products. This Streptomyces sp protein is Diterpene cyclase DtcycA.